A 170-amino-acid chain; its full sequence is Flavodoxin (170 aa).

The region spanning 4 to 165 (IGLFYGTQTG…RVKTWVSEIK (162 aa)) is the Flavodoxin-like domain.

Belongs to the flavodoxin family. FMN is required as a cofactor.

Low-potential electron donor to a number of redox enzymes. This Synechocystis sp. (strain ATCC 27184 / PCC 6803 / Kazusa) protein is Flavodoxin (isiB).